Here is an 843-residue protein sequence, read N- to C-terminus: Urease (843 aa).

One can recognise a Urease domain in the interval 400-843; the sequence is GGIDCHVHFI…VPLSRNYFLF (444 aa). Ni(2+)-binding residues include H405, H407, and K488. K488 carries the post-translational modification N6-carboxylysine. A substrate-binding site is contributed by H490. Residues H517 and H543 each coordinate Ni(2+). Catalysis depends on H591, which acts as the Proton donor. D631 is a Ni(2+) binding site.

In the C-terminal section; belongs to the metallo-dependent hydrolases superfamily. Urease alpha subunit family. As to quaternary structure, homohexamer. Other oligomeric forms may exist depending on pH and presence of salts. The cofactor is Ni(2+). In terms of processing, carboxylation allows a single lysine to coordinate two nickel ions.

The enzyme catalyses urea + 2 H2O + H(+) = hydrogencarbonate + 2 NH4(+). It functions in the pathway nitrogen metabolism; urea degradation; CO(2) and NH(3) from urea (urease route): step 1/1. Functionally, urea hydrolase involved in nitrogen recycling from ureide, purine, and arginine catabolism. In Oryza sativa subsp. indica (Rice), this protein is Urease.